Consider the following 1819-residue polypeptide: Non-reducing polyketide synthase 8 (1819 aa).

In terms of domain architecture, Starter acyltransferase (SAT) spans 38 to 265 (QLTLLSKQKQ…QKIINLPVYG (228 aa)). A Ketosynthase family 3 (KS3) domain is found at 405–840 (KSSIAIVGMS…GGNTMIAIEE (436 aa)). Catalysis depends on for beta-ketoacyl synthase activity residues cysteine 578, histidine 714, and histidine 758. The Malonyl-CoA:ACP transacylase (MAT) domain occupies 943 to 1262 (FAFTGQGASY…SLSTLHCAGA (320 aa)). An N-terminal hotdog fold region spans residues 1336–1476 (QRIIEESFDG…GDRSAWLSSW (141 aa)). The 311-residue stretch at 1336 to 1646 (QRIIEESFDG…FRQYPRILLN (311 aa)) folds into the PKS/mFAS DH domain. Histidine 1368 acts as the Proton acceptor; for dehydratase activity in catalysis. Residues 1404–1642 (AMNVADLEVV…GGIKFRQYPR (239 aa)) are dehydratase (DH) domain. The C-terminal hotdog fold stretch occupies residues 1498–1646 (IANRLSHNMA…FRQYPRILLN (149 aa)). Residue aspartate 1557 is the Proton donor; for dehydratase activity of the active site. In terms of domain architecture, Carrier spans 1741–1818 (VDTNSVASKA…DLRSWLMEYY (78 aa)). An O-(pantetheine 4'-phosphoryl)serine modification is found at serine 1778.

Requires pantetheine 4'-phosphate as cofactor.

Its pathway is secondary metabolite biosynthesis. In terms of biological role, non-reducing polyketide synthase; part of the gene cluster that mediates the biosynthesis of dibenzodioxocinones such as pestalotiollide B, a novel class of inhibitors against cholesterol ester transfer protein (CEPT). The biosynthesis initiates from condensation of acetate and malonate units catalyzed by the non-reducing PKS pks8/GME11356. Pks8/GME11356 lacks a thioesterase (TE) domain, which is important to the cyclizing of the third ring of atrochrysone carboxylic acid, and the esterase GME11355 might play the role of TE and catalyzes the cyclization reaction of the C ring. The lactamase-like protein GME11357 (or other beta-lactamases in Pestalotiopsis microspora) probably hydrolyzes the thioester bond between the ACP of pks8/GME11356 and the intermediate to release atrochrysone carboxylic acid, which is spontaneously dehydrates to form endocrocin anthrone. Endocrocin anthrone is further converted to emodin via the endocrocin intermediate. Emodin is then oxidized by several enzymes such as the Baeyer-Villiger oxidase GME11358, the oxidoreductase GME11367, the short chain dehydrogenase/reductase GME11373, as well as by other oxidoreductases from the cluster, to modify the A and C rings and open the B ring, and finally yield monodictyphenone. The prenyltransferase GME11375 may catalyze the addition reaction between the C5 side chains and the carbon bone of dibenzodioxocinones. The remaining biochemical reactions to the final product dibenzodioxocinones should be methylation catalyzed by methyltransferase GME11366 and reduction and lactonization reaction catalyzed by a series of oxidordeuctases. This chain is Non-reducing polyketide synthase 8, found in Pestalotiopsis microspora.